We begin with the raw amino-acid sequence, 475 residues long: UDP-glucosyltransferase UGT13248 (475 aa).

Residues 1–17 (METTVTAVSGTTSSSVG) show a composition bias toward low complexity. Residues 1–20 (METTVTAVSGTTSSSVGHGA) form a disordered region. Residues histidine 38, serine 152, threonine 299, cysteine 352, 369–377 (HCGWNSTLE), and 393–394 (DQ) each bind UDP-alpha-D-glucose.

It belongs to the UDP-glycosyltransferase family.

Involved in the detoxification of the Fusarium mycotoxin deoxynivalenol by the transfer of glucose from UDP-D-glucose to the hydroxyl group at C-3, forming deoxynivalenol-3-O-beta-D-glucoside. This chain is UDP-glucosyltransferase UGT13248, found in Hordeum vulgare subsp. vulgare (Domesticated barley).